A 364-amino-acid polypeptide reads, in one-letter code: tRNA 2-selenouridine synthase (364 aa).

The region spanning L14 to I137 is the Rhodanese domain. The active-site S-selanylcysteine intermediate is the C97.

It belongs to the SelU family. As to quaternary structure, monomer.

The catalysed reaction is 5-methylaminomethyl-2-thiouridine(34) in tRNA + selenophosphate + (2E)-geranyl diphosphate + H2O + H(+) = 5-methylaminomethyl-2-selenouridine(34) in tRNA + (2E)-thiogeraniol + phosphate + diphosphate. It carries out the reaction 5-methylaminomethyl-2-thiouridine(34) in tRNA + (2E)-geranyl diphosphate = 5-methylaminomethyl-S-(2E)-geranyl-thiouridine(34) in tRNA + diphosphate. The enzyme catalyses 5-methylaminomethyl-S-(2E)-geranyl-thiouridine(34) in tRNA + selenophosphate + H(+) = 5-methylaminomethyl-2-(Se-phospho)selenouridine(34) in tRNA + (2E)-thiogeraniol. It catalyses the reaction 5-methylaminomethyl-2-(Se-phospho)selenouridine(34) in tRNA + H2O = 5-methylaminomethyl-2-selenouridine(34) in tRNA + phosphate. Its function is as follows. Involved in the post-transcriptional modification of the uridine at the wobble position (U34) of tRNA(Lys), tRNA(Glu) and tRNA(Gln). Catalyzes the conversion of 2-thiouridine (S2U-RNA) to 2-selenouridine (Se2U-RNA). Acts in a two-step process involving geranylation of 2-thiouridine (S2U) to S-geranyl-2-thiouridine (geS2U) and subsequent selenation of the latter derivative to 2-selenouridine (Se2U) in the tRNA chain. The chain is tRNA 2-selenouridine synthase from Escherichia coli O6:K15:H31 (strain 536 / UPEC).